Consider the following 178-residue polypeptide: Zinc finger CCHC domain-containing protein 10 (178 aa).

The CCHC-type zinc-finger motif lies at 21 to 38 (VRCQKCLEFGHWTYECKG). Positions 66–178 (QSIGETNIEK…EPQKKKKKKK (113 aa)) are disordered. Composition is skewed to low complexity over residues 85 to 113 (SVTSSSTSSSDSSASESSSESETSASSSS) and 121 to 164 (SLSS…SSES).

This is Zinc finger CCHC domain-containing protein 10 (Zcchc10) from Mus musculus (Mouse).